A 479-amino-acid chain; its full sequence is Poly(A) polymerase catalytic subunit (479 aa).

Active-site residues include D202 and D204. Residues D202, D204, and D253 each contribute to the Ca(2+) site.

The protein belongs to the poxviridae poly(A) polymerase catalytic subunit family. As to quaternary structure, heterodimer of a large (catalytic) subunit and a small (regulatory) subunit.

It catalyses the reaction RNA(n) + ATP = RNA(n)-3'-adenine ribonucleotide + diphosphate. Polymerase that creates the 3'-poly(A) tail of mRNA's. This is Poly(A) polymerase catalytic subunit (OPG063) from Homo sapiens (Human).